A 371-amino-acid chain; its full sequence is 3-isopropylmalate dehydrogenase (371 aa).

Residue 77 to 90 (GPKWDDNPPHLRPE) coordinates NAD(+). Arg97, Arg107, Arg135, and Asp224 together coordinate substrate. Residues Asp224, Asp248, and Asp252 each coordinate Mg(2+). Residue 282-294 (GSAPDIAGMNKAN) participates in NAD(+) binding.

Belongs to the isocitrate and isopropylmalate dehydrogenases family. LeuB type 1 subfamily. Homodimer. Requires Mg(2+) as cofactor. The cofactor is Mn(2+).

It localises to the cytoplasm. It carries out the reaction (2R,3S)-3-isopropylmalate + NAD(+) = 4-methyl-2-oxopentanoate + CO2 + NADH. It participates in amino-acid biosynthesis; L-leucine biosynthesis; L-leucine from 3-methyl-2-oxobutanoate: step 3/4. Catalyzes the oxidation of 3-carboxy-2-hydroxy-4-methylpentanoate (3-isopropylmalate) to 3-carboxy-4-methyl-2-oxopentanoate. The product decarboxylates to 4-methyl-2 oxopentanoate. The chain is 3-isopropylmalate dehydrogenase from Geobacillus kaustophilus (strain HTA426).